The chain runs to 417 residues: Lipoyl synthase, mitochondrial (417 aa).

The disordered stretch occupies residues 35-56 (EANPTDLAGLKRKAKRRPTKLA). Residues 44 to 53 (LKRKAKRRPT) show a composition bias toward basic residues. Cys122, Cys127, Cys133, Cys152, Cys156, Cys159, and Ser367 together coordinate [4Fe-4S] cluster. Positions 137–356 (KKSEATATIM…RDKALEMGFL (220 aa)) constitute a Radical SAM core domain. Residues 389–417 (IEEQQHDKENNNLLLSKEDEKTTQEKANF) form a disordered region. The segment covering 391–417 (EQQHDKENNNLLLSKEDEKTTQEKANF) has biased composition (basic and acidic residues).

The protein belongs to the radical SAM superfamily. Lipoyl synthase family. It depends on [4Fe-4S] cluster as a cofactor.

It is found in the mitochondrion. It catalyses the reaction [[Fe-S] cluster scaffold protein carrying a second [4Fe-4S](2+) cluster] + N(6)-octanoyl-L-lysyl-[protein] + 2 oxidized [2Fe-2S]-[ferredoxin] + 2 S-adenosyl-L-methionine + 4 H(+) = [[Fe-S] cluster scaffold protein] + N(6)-[(R)-dihydrolipoyl]-L-lysyl-[protein] + 4 Fe(3+) + 2 hydrogen sulfide + 2 5'-deoxyadenosine + 2 L-methionine + 2 reduced [2Fe-2S]-[ferredoxin]. The protein operates within protein modification; protein lipoylation via endogenous pathway; protein N(6)-(lipoyl)lysine from octanoyl-[acyl-carrier-protein]: step 2/2. Functionally, catalyzes the radical-mediated insertion of two sulfur atoms into the C-6 and C-8 positions of the octanoyl moiety bound to the lipoyl domains of lipoate-dependent enzymes, thereby converting the octanoylated domains into lipoylated derivatives. The polypeptide is Lipoyl synthase, mitochondrial (Komagataella phaffii (strain GS115 / ATCC 20864) (Yeast)).